A 671-amino-acid chain; its full sequence is MSEFQLVTRFEPAGDQPEAIRQLVEGIDAGLAHQTLLGVTGSGKTFSIANVISQIKRPTLVLAPNKTLAAQLYGEFKAFFPNNAVEYFVSYYDYYQPEAYVPSSDTFIEKDASINDHIEQMRLSATKALLERKDAIIVTTVSCIYGLGSPETYLRMVMHIDRGDKLDQRALLRRLADLQYTRNDMDFARATFRVRGDVIDIYPAESDLEAIRVELFDDEVESLSAFDPLTGEVIRKLPRFTFYPKSHYVTPRETLIEAMENIKVELQERLEYLRSQNKLVEAQRLEQRTRFDLEMMLELGYCNGIENYSRYLSGRPSGAPPPTLFDYLPPDALLVIDESHVSVPQVGAMYKGDRSRKETLVEYGFRLPSALDNRPMRFDEWEAISPQTIFVSATPGNYEAEHAGRIVEQVVRPTGLVDPQIEIRPALTQVDDLLSEIHKRAALEERVLVTTLTKRMSEDLTDYLSDHGVRVRYLHSDIDTVERVEIIRDLRLGTFDVLVGINLLREGLDMPEVSLVAILDADKEGFLRSDRSLIQTIGRAARNLNGRAILYADRITGSMERAIGETERRREKQIAFNLEHGITPKGVFKDVADIMEGATVPGSRSKKRKGMAKAAEENARYENELRSPSEINKRIRQLEEKMYQLARDLEFEAAAQMRDEIGKLRERLLAV.

Residues 25-412 form the Helicase ATP-binding domain; sequence EGIDAGLAHQ…AGRIVEQVVR (388 aa). 38-45 is a binding site for ATP; it reads GVTGSGKT. A Beta-hairpin motif is present at residues 91–114; the sequence is YYDYYQPEAYVPSSDTFIEKDASI. Positions 429 to 582 constitute a Helicase C-terminal domain; that stretch reads QVDDLLSEIH…QIAFNLEHGI (154 aa). The segment at 601 to 624 is disordered; that stretch reads PGSRSKKRKGMAKAAEENARYENE. Basic and acidic residues predominate over residues 614 to 624; that stretch reads AAEENARYENE. The region spanning 632-667 is the UVR domain; the sequence is NKRIRQLEEKMYQLARDLEFEAAAQMRDEIGKLRER.

The protein belongs to the UvrB family. Forms a heterotetramer with UvrA during the search for lesions. Interacts with UvrC in an incision complex.

It is found in the cytoplasm. Functionally, the UvrABC repair system catalyzes the recognition and processing of DNA lesions. A damage recognition complex composed of 2 UvrA and 2 UvrB subunits scans DNA for abnormalities. Upon binding of the UvrA(2)B(2) complex to a putative damaged site, the DNA wraps around one UvrB monomer. DNA wrap is dependent on ATP binding by UvrB and probably causes local melting of the DNA helix, facilitating insertion of UvrB beta-hairpin between the DNA strands. Then UvrB probes one DNA strand for the presence of a lesion. If a lesion is found the UvrA subunits dissociate and the UvrB-DNA preincision complex is formed. This complex is subsequently bound by UvrC and the second UvrB is released. If no lesion is found, the DNA wraps around the other UvrB subunit that will check the other stand for damage. This Pseudomonas syringae pv. syringae (strain B728a) protein is UvrABC system protein B.